A 90-amino-acid polypeptide reads, in one-letter code: uncharacterized protein (90 aa).

This is an uncharacterized protein from Escherichia coli (strain K12).